The following is a 264-amino-acid chain: MMQRCWQISLPLARRRLIPSLTSKRTAATEAPLDELDAFEREYLKQRIQITPFQRLLLGAGSSLASLLDPHRHDMIACLGETTGENALWNILDTMQASEEGRRILVEKPRINTRTIDLKRLEAMPPDTFGATYAKFLKDNNVTPDTRMEVHFLDDPKLAYVMTRYRECHDLVHAVLNMPTNMLCEVTVKWVEALNTGLPMCYGGAVFGAVRLRPKQRREYLRRYLPWAIENSKQMKPLMPIYWERRWEQNVDELRNELGIKLLQ.

Residues 1-26 (MMQRCWQISLPLARRRLIPSLTSKRT) constitute a mitochondrion transit peptide. Residues His-169, Asp-170, His-173, and Glu-185 each coordinate Zn(2+).

The protein belongs to the COQ4 family. As to quaternary structure, component of a multi-subunit COQ enzyme complex. The cofactor is Zn(2+).

Its subcellular location is the mitochondrion inner membrane. The enzyme catalyses a 4-hydroxy-3-methoxy-5-(all-trans-polyprenyl)benzoate + H(+) = a 2-methoxy-6-(all-trans-polyprenyl)phenol + CO2. The protein operates within cofactor biosynthesis; ubiquinone biosynthesis. Lyase that catalyzes the C1-decarboxylation of 4-hydroxy-3-methoxy-5-(all-trans-polyprenyl)benzoic acid into 2-methoxy-6-(all-trans-polyprenyl)phenol during ubiquinone biosynthesis. The protein is Ubiquinone biosynthesis protein COQ4 homolog, mitochondrial of Drosophila grimshawi (Hawaiian fruit fly).